Consider the following 197-residue polypeptide: MSSASAPGPAPACLTLWDEEDFQGRRCRLLSDCANVGERGGLRRVRSVKVENGAWVAFEYPDFQGQQFILEKGDYPRWSAWSGSSGHHSNQLLSFRPVLCANHSDSRVTLFEGENFQGCKFELSDDYPSLPSMGWASKEVGSLKVSSGAWVAYQYPGYRGYQYVLERDRHSGEFRNYSEFGTQAHTGQLQSIRRVQH.

The tract at residues Met-1–Pro-11 is N-terminal arm. Beta/gamma crystallin 'Greek key' domains lie at Ala-12 to Asn-52 and Gly-53 to Leu-99. A connecting peptide region spans residues Cys-100–Asp-105. 2 consecutive Beta/gamma crystallin 'Greek key' domains span residues Ser-106 to Ser-147 and Gly-148 to Gln-196.

Belongs to the beta/gamma-crystallin family. Homo/heterodimer, or complexes of higher-order. The structure of beta-crystallin oligomers seems to be stabilized through interactions between the N-terminal arms.

Crystallins are the dominant structural components of the vertebrate eye lens. The sequence is that of Beta-crystallin A2 (CRYBA2) from Oryctolagus cuniculus (Rabbit).